The primary structure comprises 553 residues: 4-coumarate--CoA ligase (553 aa).

ATP is bound by residues Ser198, Ser199, Gly200, Thr201, Thr202, and Lys206. Positions 248 and 252 each coordinate (E)-4-coumaroyl-AMP. Lys269 serves as a coordination point for CoA. Residues 271 to 340 are SBD1; the sequence is EIVPFLELIQ…AKFPNAKLGQ (70 aa). Ala318, Gln340, Gly341, Thr345, and Met353 together coordinate (E)-4-coumaroyl-AMP. The ATP site is built by Gln340, Gly341, and Thr345. The interval 341 to 408 is SBD2; it reads GYGMTEAGPV…IRGDQIMKGY (68 aa). Positions 429 and 444 each coordinate ATP. Lys446 and Lys450 together coordinate (E)-4-coumaroyl-AMP. Residues Lys452 and Gly453 each coordinate CoA. Lys535 serves as a coordination point for ATP.

Belongs to the ATP-dependent AMP-binding enzyme family. Mg(2+) serves as cofactor.

The catalysed reaction is (E)-4-coumarate + ATP + CoA = (E)-4-coumaroyl-CoA + AMP + diphosphate. The enzyme catalyses (E)-4-coumarate + ATP + H(+) = (E)-4-coumaroyl-AMP + diphosphate. It carries out the reaction (E)-4-coumaroyl-AMP + CoA = (E)-4-coumaroyl-CoA + AMP + H(+). It functions in the pathway phytoalexin biosynthesis; 3,4',5-trihydroxystilbene biosynthesis; 3,4',5-trihydroxystilbene from trans-4-coumarate: step 1/2. Carboxylate--CoA ligase that may use 4-coumarate as substrate. Follows a two-step reaction mechanism, wherein the carboxylate substrate first undergoes adenylation by ATP, followed by a thioesterification in the presence of CoA to yield the final CoA thioester. The chain is 4-coumarate--CoA ligase from Vanilla planifolia (Vanilla).